A 139-amino-acid chain; its full sequence is Natriuretic peptide Mf-NP (139 aa).

Positions 1-25 (MVGLSRLTGGGLLLVLALLPLALDG) are cleaved as a signal peptide. The propeptide occupies 26-75 (KPLEEAPTAPSRIIPFSRPVRKESQAVLDPMVHPERPAGSGDDGDLSRLE). Cys86 and Cys102 are joined by a disulfide. Residues 117–139 (IIPFSRPVRKESRAALDRMQHPG) constitute a propeptide that is removed on maturation.

It belongs to the natriuretic peptide family. In terms of tissue distribution, expressed by the venom gland.

It localises to the secreted. Its function is as follows. Natriuretic peptide that dose-dependently induces the rapid relaxation of rat aortic strips phenylephrine-precontracted. Acts by stimulating cGMP production in a dose-dependent manner (by probably activating NPR1 and/or NPR2). May also show potent hypotensive effects. This Micrurus fulvius (Eastern coral snake) protein is Natriuretic peptide Mf-NP.